A 240-amino-acid polypeptide reads, in one-letter code: Serine protease SplB (240 aa).

The first 36 residues, 1-36 (MNKNVVIKSLAALTILTSVTGIGTTLVEEVQQTAKA), serve as a signal peptide directing secretion. Active-site charge relay system residues include His75, Asp113, and Ser193.

This sequence belongs to the peptidase S1B family.

The protein resides in the secreted. Functionally, serine protease that cleaves specifically after the sequence Trp-Glu-Leu-Gln. The chain is Serine protease SplB (splB) from Staphylococcus aureus (strain USA300).